The chain runs to 179 residues: Ubiquitin-conjugating enzyme E2 C (179 aa).

Ala-2 is subject to N-acetylalanine. Phosphoserine is present on Ser-3. The UBC core domain occupies 30–175 (PVGKRLQQEL…LQETYSKQVS (146 aa)). Catalysis depends on Cys-114, which acts as the Glycyl thioester intermediate.

It belongs to the ubiquitin-conjugating enzyme family. In terms of assembly, component of the APC/C complex, composed of at least 14 distinct subunits that assemble into a complex of at least 19 chains with a combined molecular mass of around 1.2 MDa. Within this complex, directly interacts with ANAPC2. Autoubiquitinated by the APC/C complex, leading to its degradation by the proteasome. Its degradation plays a central role in APC/C regulation, allowing cyclin-A accumulation before S phase entry. APC/C substrates inhibit the autoubiquitination of UBE2C/UBCH10 but not its E2 function, hence APC/C remaining active until its substrates have been destroyed.

The catalysed reaction is S-ubiquitinyl-[E1 ubiquitin-activating enzyme]-L-cysteine + [E2 ubiquitin-conjugating enzyme]-L-cysteine = [E1 ubiquitin-activating enzyme]-L-cysteine + S-ubiquitinyl-[E2 ubiquitin-conjugating enzyme]-L-cysteine.. It carries out the reaction S-ubiquitinyl-[E1 ubiquitin-activating enzyme]-L-cysteine + [acceptor protein]-L-lysine = [E1 ubiquitin-activating enzyme]-L-cysteine + N(6)-monoubiquitinyl-[acceptor protein]-L-lysine.. The protein operates within protein modification; protein ubiquitination. Accepts ubiquitin from the E1 complex and catalyzes its covalent attachment to other proteins. In vitro catalyzes 'Lys-11'- and 'Lys-48'-linked polyubiquitination. Acts as an essential factor of the anaphase promoting complex/cyclosome (APC/C), a cell cycle-regulated ubiquitin ligase that controls progression through mitosis. Acts by initiating 'Lys-11'-linked polyubiquitin chains on APC/C substrates, leading to the degradation of APC/C substrates by the proteasome and promoting mitotic exit. The polypeptide is Ubiquitin-conjugating enzyme E2 C (Ube2c) (Mus musculus (Mouse)).